We begin with the raw amino-acid sequence, 901 residues long: Envelope glycoprotein B (901 aa).

Residues M1–C34 form the signal peptide. At E35 to P736 the chain is on the virion surface side. Residues N53, N60, and N66 are each glycosylated (N-linked (GlcNAc...) asparagine; by host). 4 disulfide bridges follow: C84–C533, C101–C489, C174–C239, and C331–C380. Residues S141–Y147 are involved in fusion and/or binding to host membrane. N-linked (GlcNAc...) asparagine; by host glycosylation occurs at N197. The tract at residues G226 to E233 is involved in fusion and/or binding to host membrane. N270, N289, N328, N372, N398, N406, N436, N537, N571, and N623 each carry an N-linked (GlcNAc...) asparagine; by host glycan. C559 and C596 form a disulfide bridge. Hydrophobic membrane proximal region regions lie at residues V683–T734 and A714–T734. The helical transmembrane segment at F737–Y757 threads the bilayer. The Intravirion segment spans residues R758–V901. Disordered regions lie at residues G794–G813 and D852–V901. 2 stretches are compositionally biased toward basic and acidic residues: residues D852–K864 and S872–R883. Positions Y890–L893 match the Internalization motif motif.

The protein belongs to the herpesviridae glycoprotein B family. As to quaternary structure, homotrimer; disulfide-linked. Binds to heparan sulfate proteoglycans. Interacts with gH/gL heterodimer. In terms of processing, a proteolytic cleavage by host furin generates two subunits that remain linked by disulfide bonds.

It localises to the virion membrane. It is found in the host cell membrane. Its subcellular location is the host endosome membrane. The protein localises to the host Golgi apparatus membrane. Functionally, envelope glycoprotein that forms spikes at the surface of virion envelope. Essential for the initial attachment to heparan sulfate moieties of the host cell surface proteoglycans. Involved in fusion of viral and cellular membranes leading to virus entry into the host cell. Following initial binding to its host receptors, membrane fusion is mediated by the fusion machinery composed at least of gB and the heterodimer gH/gL. May be involved in the fusion between the virion envelope and the outer nuclear membrane during virion egress. In Guinea pig cytomegalovirus (strain 22122) (GPCMV), this protein is Envelope glycoprotein B.